The primary structure comprises 331 residues: Olfactory receptor 7E178 (331 aa).

Over 1-47 (MMDRYSFIMHQHRDDTVWCPSKIEEQNITRISEFHLMGLSDDLQLQP) the chain is Extracellular. Asn-27 is a glycosylation site (N-linked (GlcNAc...) asparagine). The helical transmembrane segment at 48-68 (ILFGLFLSMYLVTLLGNLLII) threads the bilayer. Residues 69-80 (LTVSSDSHLHSP) are Cytoplasmic-facing. The chain crosses the membrane as a helical span at residues 81 to 100 (MYFFLSNLSLADVSFTSTTL). The Extracellular portion of the chain corresponds to 101–119 (PKMIVDIQTHNRAISYSGC). The cysteines at positions 119 and 201 are disulfide-linked. The helical transmembrane segment at 120 to 140 (LTQMSFFMLFGCLDSLLLTAM) threads the bilayer. The Cytoplasmic portion of the chain corresponds to 141–164 (AYDRFVAICHPLHYQFIMNPRLCG). Residues 165-185 (LLVFLSVLISLFVSQLHNSVV) traverse the membrane as a helical segment. Residues 186–218 (LQLTYFKSVDISHFFCDPSQLLNLACSDTFTNN) are Extracellular-facing. The helical transmembrane segment at 219 to 239 (IVMYFVGAISGFLPISGIFFS) threads the bilayer. At 240-266 (YYKIVSSILRMPSPGGKYKAFSTCGSH) the chain is on the cytoplasmic side. A helical membrane pass occupies residues 267 to 287 (LSVVCLFYGTGLGVYLSSAVS). The Extracellular segment spans residues 288-293 (LSPRKG). Residues 294–314 (AVASIVYTVVTPMLNPFIYSL) form a helical membrane-spanning segment. Residues 315–331 (RNQDIKRAMWRLLRKTV) are Cytoplasmic-facing.

It belongs to the G-protein coupled receptor 1 family.

The protein resides in the cell membrane. Odorant receptor. The polypeptide is Olfactory receptor 7E178 (Mus musculus (Mouse)).